An 840-amino-acid polypeptide reads, in one-letter code: Translation initiation factor IF-2 (840 aa).

2 disordered regions span residues 94 to 157 (KRSP…AGAE) and 169 to 256 (PVAK…PTGP). Basic and acidic residues predominate over residues 95–143 (RSPDEIEAERQRELEEQRAAEEAERLKAEEAAARQRAEEEARKAEEAAR). Low complexity predominate over residues 144-157 (AKAAQEAAATAGAE). Basic and acidic residues-rich tracts occupy residues 175 to 191 (AVEERKKEEPRRAPKRD) and 223 to 232 (STDEESDGYR). Basic residues predominate over residues 233–247 (RGGRGGKSKLKKRNQ). The region spanning 340 to 509 (TRAPVVTVMG…LLQAEVLELK (170 aa)) is the tr-type G domain. The segment at 349–356 (GHVDHGKT) is G1. 349 to 356 (GHVDHGKT) is a binding site for GTP. The segment at 374 to 378 (GITQH) is G2. Residues 395–398 (DTPG) are G3. Residues 395–399 (DTPGH) and 449–452 (NKID) each bind GTP. The tract at residues 449–452 (NKID) is G4. Positions 485–487 (SAK) are G5.

It belongs to the TRAFAC class translation factor GTPase superfamily. Classic translation factor GTPase family. IF-2 subfamily.

It localises to the cytoplasm. Its function is as follows. One of the essential components for the initiation of protein synthesis. Protects formylmethionyl-tRNA from spontaneous hydrolysis and promotes its binding to the 30S ribosomal subunits. Also involved in the hydrolysis of GTP during the formation of the 70S ribosomal complex. This Pseudomonas aeruginosa (strain UCBPP-PA14) protein is Translation initiation factor IF-2.